A 196-amino-acid polypeptide reads, in one-letter code: Transcription repressor OFP10 (196 aa).

Residues 100-159 (MAKESINPFEDYKKSMNQMIEERYIETESELKELLRCFLDINPSPQHNLIVRAFVDVCSH) form the OVATE domain.

As to expression, expressed in roots, cauline leaves, shoots, stems, flower buds and siliques.

Its subcellular location is the nucleus. Transcriptional repressor that may regulate multiple aspects of plant growth and development through the regulation of BEL1-LIKE (BLH) and KNOX TALE (KNAT) homeodomain transcription factors. This chain is Transcription repressor OFP10 (OFP10), found in Arabidopsis thaliana (Mouse-ear cress).